Consider the following 518-residue polypeptide: MLGAVGRCCTGALQALRPGVTPLKALNGAPAALFSRRDYVAPAAAAAAASGRIVAVIGAVVDVQFDEDLPPILNALEVAGRDTRLVLEVAQHLGENTVRTIAMDGTEGLVRGQKVLDTGAPIRIPVGPETLGRIMNVIGEPIDERGPITTKQTAPIHAEAPEFTDMSVEQEILVTGIKVVDLLAPYAKGGKIGLFGGAGVGKTVLIMELINNVAKAHGGYSVFAGVGERTREGNDLYHEMIESGVINLKDTTSKVALVYGQMNEPPGARARVALTGLTVAEYFRDQEGQDVLLFIDNIFRFTQAGSEVSALLGRIPSAVGYQPTLATDMGTMQERITTTKKGSITSVQAIYVPADDLTDPAPATTFAHLDATTVLSRAIAELGIYPAVDPLDSTSRIMDPNIVGSEHYDVARGVQKILQDYKSLQDIIAILGMDELSEEDKLTVARARKIQRFLSQPFQVAEVFTGHLGKLVPLKDTIKGFKAILGGEYDALPEQAFYMVGPIEEVVQKAEKLAEEHS.

6 residues coordinate ADP: G199, V200, G201, K202, T203, and V204. ATP is bound at residue G199. 5 residues coordinate phosphate: G199, V200, G201, K202, and T203. ATP contacts are provided by G201, K202, T203, and V204. T203 serves as a coordination point for Mg(2+). Mg(2+) is bound at residue E228. Position 229 (R229) interacts with ATP.

The protein belongs to the ATPase alpha/beta chains family. Homotrimer. Component of the ATP synthase complex composed at least of ATP5F1A/subunit alpha, ATP5F1B/subunit beta, ATP5MC1/subunit c (homooctomer), MT-ATP6/subunit a, MT-ATP8/subunit 8, ATP5ME/subunit e, ATP5MF/subunit f, ATP5MG/subunit g, ATP5MK/subunit k, ATP5MJ/subunit j, ATP5F1C/subunit gamma, ATP5F1D/subunit delta, ATP5F1E/subunit epsilon, ATP5PF/subunit F6, ATP5PB/subunit b, ATP5PD/subunit d, ATP5PO/subunit OSCP. ATP synthase complex consists of a soluble F(1) head domain (subunits alpha(3) and beta(3)) - the catalytic core - and a membrane F(0) domain - the membrane proton channel (subunits c, a, 8, e, f, g, k and j). These two domains are linked by a central stalk (subunits gamma, delta, and epsilon) rotating inside the F1 region and a stationary peripheral stalk (subunits F6, b, d, and OSCP).

The protein localises to the mitochondrion inner membrane. The catalysed reaction is ATP + H2O + 4 H(+)(in) = ADP + phosphate + 5 H(+)(out). Catalytic subunit beta, of the mitochondrial membrane ATP synthase complex (F(1)F(0) ATP synthase or Complex V) that produces ATP from ADP in the presence of a proton gradient across the membrane which is generated by electron transport complexes of the respiratory chain. ATP synthase complex consist of a soluble F(1) head domain - the catalytic core - and a membrane F(1) domain - the membrane proton channel. These two domains are linked by a central stalk rotating inside the F(1) region and a stationary peripheral stalk. During catalysis, ATP synthesis in the catalytic domain of F(1) is coupled via a rotary mechanism of the central stalk subunits to proton translocation. In vivo, can only synthesize ATP although its ATP hydrolase activity can be activated artificially in vitro. With the subunit alpha (ATP5F1A), forms the catalytic core in the F(1) domain. The chain is ATP synthase F(1) complex catalytic subunit beta, mitochondrial from Cyprinus carpio (Common carp).